A 713-amino-acid chain; its full sequence is Polyribonucleotide nucleotidyltransferase (713 aa).

Mg(2+) is bound by residues D493 and D499. The KH domain maps to 560–619 (PRMITIKINPEKIRDVIGKGGSVIRALTEETGTTIDISDDGVVTIASTNSEGMAEAKKRI). Positions 629–697 (GHVYEGTVLK…EKGRVRLSAK (69 aa)) constitute an S1 motif domain.

The protein belongs to the polyribonucleotide nucleotidyltransferase family. Requires Mg(2+) as cofactor.

The protein resides in the cytoplasm. It catalyses the reaction RNA(n+1) + phosphate = RNA(n) + a ribonucleoside 5'-diphosphate. Functionally, involved in mRNA degradation. Catalyzes the phosphorolysis of single-stranded polyribonucleotides processively in the 3'- to 5'-direction. This Burkholderia pseudomallei (strain 1106a) protein is Polyribonucleotide nucleotidyltransferase.